The primary structure comprises 506 residues: Bifunctional purine biosynthesis protein PurH (506 aa).

The region spanning 1–142 (MRAIISVYRK…KNFFRVVILV (142 aa)) is the MGS-like domain.

This sequence belongs to the PurH family.

It catalyses the reaction (6R)-10-formyltetrahydrofolate + 5-amino-1-(5-phospho-beta-D-ribosyl)imidazole-4-carboxamide = 5-formamido-1-(5-phospho-D-ribosyl)imidazole-4-carboxamide + (6S)-5,6,7,8-tetrahydrofolate. The enzyme catalyses IMP + H2O = 5-formamido-1-(5-phospho-D-ribosyl)imidazole-4-carboxamide. It participates in purine metabolism; IMP biosynthesis via de novo pathway; 5-formamido-1-(5-phospho-D-ribosyl)imidazole-4-carboxamide from 5-amino-1-(5-phospho-D-ribosyl)imidazole-4-carboxamide (10-formyl THF route): step 1/1. It functions in the pathway purine metabolism; IMP biosynthesis via de novo pathway; IMP from 5-formamido-1-(5-phospho-D-ribosyl)imidazole-4-carboxamide: step 1/1. The polypeptide is Bifunctional purine biosynthesis protein PurH (Aquifex aeolicus (strain VF5)).